The primary structure comprises 179 residues: Ribosome maturation factor RimM (179 aa).

The PRC barrel domain maps to 100–176 (KEEFHLLELI…FLIINPPNGL (77 aa)).

It belongs to the RimM family. As to quaternary structure, binds ribosomal protein uS19.

The protein resides in the cytoplasm. An accessory protein needed during the final step in the assembly of 30S ribosomal subunit, possibly for assembly of the head region. Essential for efficient processing of 16S rRNA. May be needed both before and after RbfA during the maturation of 16S rRNA. It has affinity for free ribosomal 30S subunits but not for 70S ribosomes. The protein is Ribosome maturation factor RimM of Prochlorococcus marinus (strain AS9601).